The chain runs to 358 residues: Phosphoserine aminotransferase (358 aa).

L-glutamate is bound at residue R41. Residues 75–76 (AR), W101, T150, D170, and Q193 each bind pyridoxal 5'-phosphate. K194 is subject to N6-(pyridoxal phosphate)lysine. 235–236 (NT) is a pyridoxal 5'-phosphate binding site.

This sequence belongs to the class-V pyridoxal-phosphate-dependent aminotransferase family. SerC subfamily. Homodimer. Pyridoxal 5'-phosphate serves as cofactor.

It localises to the cytoplasm. It carries out the reaction O-phospho-L-serine + 2-oxoglutarate = 3-phosphooxypyruvate + L-glutamate. It catalyses the reaction 4-(phosphooxy)-L-threonine + 2-oxoglutarate = (R)-3-hydroxy-2-oxo-4-phosphooxybutanoate + L-glutamate. The protein operates within amino-acid biosynthesis; L-serine biosynthesis; L-serine from 3-phospho-D-glycerate: step 2/3. It participates in cofactor biosynthesis; pyridoxine 5'-phosphate biosynthesis; pyridoxine 5'-phosphate from D-erythrose 4-phosphate: step 3/5. In terms of biological role, catalyzes the reversible conversion of 3-phosphohydroxypyruvate to phosphoserine and of 3-hydroxy-2-oxo-4-phosphonooxybutanoate to phosphohydroxythreonine. This chain is Phosphoserine aminotransferase, found in Histophilus somni (strain 129Pt) (Haemophilus somnus).